Consider the following 421-residue polypeptide: Imidazolonepropionase (421 aa).

Positions 81 and 83 each coordinate Fe(3+). Positions 81 and 83 each coordinate Zn(2+). Residues Arg90, Tyr153, and His186 each coordinate 4-imidazolone-5-propanoate. An N-formimidoyl-L-glutamate-binding site is contributed by Tyr153. His251 serves as a coordination point for Fe(3+). His251 provides a ligand contact to Zn(2+). Residue Glu254 participates in 4-imidazolone-5-propanoate binding. Asp326 contributes to the Fe(3+) binding site. Zn(2+) is bound at residue Asp326. N-formimidoyl-L-glutamate contacts are provided by Asn328 and Gly330. Residue Ser331 coordinates 4-imidazolone-5-propanoate.

This sequence belongs to the metallo-dependent hydrolases superfamily. HutI family. Zn(2+) is required as a cofactor. It depends on Fe(3+) as a cofactor.

The protein localises to the cytoplasm. It carries out the reaction 4-imidazolone-5-propanoate + H2O = N-formimidoyl-L-glutamate. Its pathway is amino-acid degradation; L-histidine degradation into L-glutamate; N-formimidoyl-L-glutamate from L-histidine: step 3/3. In terms of biological role, catalyzes the hydrolytic cleavage of the carbon-nitrogen bond in imidazolone-5-propanoate to yield N-formimidoyl-L-glutamate. It is the third step in the universal histidine degradation pathway. The polypeptide is Imidazolonepropionase (Streptococcus pyogenes serotype M12 (strain MGAS2096)).